A 77-amino-acid polypeptide reads, in one-letter code: Conotoxin VnMEKL-023 (77 aa).

Positions 1 to 19 (MQKLTILLLVAAVLMSTQA) are cleaved as a signal peptide. Residues 20–37 (LIKGGGEKRPKEKIRFLS) constitute a propeptide that is removed on maturation. Cystine bridges form between C51–C65, C58–C69, and C64–C74.

It belongs to the conotoxin O2 superfamily. Expressed by the venom duct.

The protein resides in the secreted. The chain is Conotoxin VnMEKL-023 from Conus ventricosus (Mediterranean cone).